The chain runs to 637 residues: MPNVKLPDGNVKHFEAPLTIYDVAHHISPGLAKAAIAGRVDGVLVDTSYLIKEDCSLIIVTEKHEDSLEIIRHSTAHLLAQAVKALFPSAQVTIGPVIEDGFYYDFAFERSFTPDDLSLIEAKMHELAKANLSITRRELPRNEAIQYFKGLGEEYKAKIIADIPENEALSLYRQGDFEDLCRGPHVPSTGFLKAFKLTKVAGAYWRGDSNNEMLQRIYGTAWADKKSLEEYLFRLEEAEKRDHRKLGKALDLFHFQDIAPGMVFWHPKGWTIYQELEHYMRNRLVDFGYQEIRTPQLVDRSLWEKSGHWANFRDEMFVTETENRHYAVKPMSCPCHVQIYNHGLKSYRDLPLRLSEFGNCHRCEPSGALHGLMRVRNMVQDDAHIFCTEDQIQSEVAMMLELVQSVYKDFGFTEIKYRLALRPEKRVGSDDVWDKAETALKLAMLGRNIEWVDAPGEGAFYGPKIECSLSDCLGRIWQCGTIQVDFSMPARLEASYVAEDGSKQTPVMLHRAILGSFERFMGILIEHYAGKLPLWLSPVQAVVLTISEKQNEYAEKVRKTLQKRGIRANFDLRNEKIGFKIREHTLQKIPYLLVVGDKEVENCQVAVRTRDGIDLGVMTIDTICDTLTQEIIRKGSI.

The region spanning 1–61 (MPNVKLPDGN…KEDCSLIIVT (61 aa)) is the TGS domain. The tract at residues 242–533 (DHRKLGKALD…LIEHYAGKLP (292 aa)) is catalytic. Cys333, His384, and His510 together coordinate Zn(2+).

Belongs to the class-II aminoacyl-tRNA synthetase family. In terms of assembly, homodimer. Zn(2+) is required as a cofactor.

It is found in the cytoplasm. It catalyses the reaction tRNA(Thr) + L-threonine + ATP = L-threonyl-tRNA(Thr) + AMP + diphosphate + H(+). Functionally, catalyzes the attachment of threonine to tRNA(Thr) in a two-step reaction: L-threonine is first activated by ATP to form Thr-AMP and then transferred to the acceptor end of tRNA(Thr). Also edits incorrectly charged L-seryl-tRNA(Thr). This Legionella pneumophila (strain Paris) protein is Threonine--tRNA ligase.